Consider the following 98-residue polypeptide: Integration host factor subunit alpha (98 aa).

A disordered region spans residues 49–70; sequence FGNFDLRDKNQRPGRNPKTGED.

It belongs to the bacterial histone-like protein family. Heterodimer of an alpha and a beta chain.

Functionally, this protein is one of the two subunits of integration host factor, a specific DNA-binding protein that functions in genetic recombination as well as in transcriptional and translational control. This Sodalis glossinidius (strain morsitans) protein is Integration host factor subunit alpha.